Reading from the N-terminus, the 753-residue chain is LON peptidase N-terminal domain and RING finger protein 3 (753 aa).

The tract at residues 17 to 57 (GSNNLELAEPEEPGTSAAAGQSAAHPEEVTPEGSQALGAQE) is disordered. The stretch at 72–105 (CKVLLTQADALASEGHLREALEVYRQLSERQQLV) is one TPR 1 repeat. The RING-type 1 zinc-finger motif lies at 159–197 (CKKCHGFLSDPVSLWCGHTFCKLCLERGRAADRRCALCG). TPR repeat units lie at residues 244–277 (ASQL…APND), 279–311 (LLYS…RPMG), and 313–345 (KAHF…DGKN). Positions 351-450 (EAQRENLELP…QGAKPDLSNP (100 aa)) are disordered. Low complexity predominate over residues 363-382 (SNQEGAAAAEESSSLANSAQ). Residues 386–413 (SSKEDRKKDQEGEDRDAASVRTGKCQEK) are compositionally biased toward basic and acidic residues. Residues 461 to 499 (CSLCMRLFYEPVTTPCGHTFCLKCLERCLDHNAKCPLCK) form an RING-type 2 zinc finger. In terms of domain architecture, Lon N-terminal spans 540–749 (MEELSNLNKN…GIRRILAFIS (210 aa)).

This Mus musculus (Mouse) protein is LON peptidase N-terminal domain and RING finger protein 3 (Lonrf3).